The sequence spans 25 residues: Panurgine K (25 aa).

2 disulfides stabilise this stretch: C8–C23 and C11–C19.

It is found in the target cell membrane. The protein resides in the secreted. Functionally, antimicrobial peptide active against Gram-positive bacteria M.luteus (MIC=1.6 uM) and B.subtilis (MIC=3.3 uM). Less active against Gram-negative bacteria E.coli (MIC=63.3 uM) and yeast C.albicans (MIC=24.2 uM). Not active against S.aureus and P.aeruginosa. Has no hemolytic activity against human erythrocytes. Probably acts by disrupting membranes of target cells. The sequence is that of Panurgine K from Panurgus calcaratus (Solitary bee).